A 689-amino-acid chain; its full sequence is uncharacterized protein (689 aa).

A substrate-binding site is contributed by S566. Y579 serves as the catalytic Proton acceptor.

Belongs to the short-chain dehydrogenases/reductases (SDR) family.

This is an uncharacterized protein from Bacillus subtilis (strain 168).